The chain runs to 292 residues: Protein-L-isoaspartate O-methyltransferase (292 aa).

The segment at 1 to 76 is disordered; that stretch reads MTEKKRFPLS…AAAPSSNERA (76 aa). The span at 28 to 48 shows a compositional bias: polar residues; the sequence is NRSSTSGKVATPQTATQNASQ. S138 is an active-site residue.

The protein belongs to the methyltransferase superfamily. L-isoaspartyl/D-aspartyl protein methyltransferase family.

The protein localises to the cytoplasm. It carries out the reaction [protein]-L-isoaspartate + S-adenosyl-L-methionine = [protein]-L-isoaspartate alpha-methyl ester + S-adenosyl-L-homocysteine. Its function is as follows. Catalyzes the methyl esterification of L-isoaspartyl residues in peptides and proteins that result from spontaneous decomposition of normal L-aspartyl and L-asparaginyl residues. It plays a role in the repair and/or degradation of damaged proteins. In Janthinobacterium sp. (strain Marseille) (Minibacterium massiliensis), this protein is Protein-L-isoaspartate O-methyltransferase.